A 239-amino-acid polypeptide reads, in one-letter code: MNVLILTGAGISAESGIPTFRDANGLWEGHAVEEVATPQGFARNPNLVHEFYNQRRRALLNPEIQPNAAHVALADFEREHLENGRGDFLLVTQNIDNLHQRAGSQNVLAMHGQLLQVRCVYSEEIFDWTGDLSVDTPHPEAPDDDSMRGCLRPNVVWFGEMPIGLTQIEKAATKADLFIAIGTSGVVYPAAGIVAQTPPHCRRIEVNLDDTPASSAFDETIRGAASVEIPKLLNHFSAM.

The region spanning 1 to 239 is the Deacetylase sirtuin-type domain; it reads MNVLILTGAG…PKLLNHFSAM (239 aa). 8 to 27 is a binding site for NAD(+); the sequence is GAGISAESGIPTFRDANGLW. Residues tyrosine 52 and arginine 55 each coordinate substrate. Residue 93–96 coordinates NAD(+); the sequence is QNID. Histidine 111 serves as the catalytic Proton acceptor. NAD(+) is bound by residues 182 to 184, 207 to 209, and alanine 225; these read GTS and NLD.

It belongs to the sirtuin family. Class III subfamily.

The protein localises to the cytoplasm. The enzyme catalyses N(6)-acetyl-L-lysyl-[protein] + NAD(+) + H2O = 2''-O-acetyl-ADP-D-ribose + nicotinamide + L-lysyl-[protein]. The catalysed reaction is N(6)-succinyl-L-lysyl-[protein] + NAD(+) + H2O = 2''-O-succinyl-ADP-D-ribose + nicotinamide + L-lysyl-[protein]. Functionally, NAD-dependent lysine deacetylase and desuccinylase that specifically removes acetyl and succinyl groups on target proteins. Modulates the activities of several proteins which are inactive in their acylated form. In Rhodopirellula baltica (strain DSM 10527 / NCIMB 13988 / SH1), this protein is NAD-dependent protein deacylase.